The sequence spans 126 residues: Glycine cleavage system H protein (126 aa).

One can recognise a Lipoyl-binding domain in the interval 22–104; it reads VVFIGITDYA…YGAGWIIKVK (83 aa). Position 63 is an N6-lipoyllysine (Lys63).

It belongs to the GcvH family. In terms of assembly, the glycine cleavage system is composed of four proteins: P, T, L and H. The cofactor is (R)-lipoate.

Its function is as follows. The glycine cleavage system catalyzes the degradation of glycine. The H protein shuttles the methylamine group of glycine from the P protein to the T protein. The protein is Glycine cleavage system H protein of Porphyromonas gingivalis (strain ATCC 33277 / DSM 20709 / CIP 103683 / JCM 12257 / NCTC 11834 / 2561).